A 535-amino-acid chain; its full sequence is Peroxisomal membrane protein PEX29 (535 aa).

A run of 2 helical transmembrane segments spans residues 139-159 (LSVP…SKPL) and 176-196 (ILLL…PAYM). N239 carries an N-linked (GlcNAc...) asparagine glycan. Residues 247-267 (MLLYVMSYDFVTSLIVKYLYF) traverse the membrane as a helical segment. The N-linked (GlcNAc...) asparagine glycan is linked to N271. The next 2 helical transmembrane spans lie at 272 to 292 (ITIF…LFGA) and 297 to 317 (AMLP…TIAM). Residues N450 and N515 are each glycosylated (N-linked (GlcNAc...) asparagine). Positions 511 to 535 (AHRRNKSMESSNSLHPVKSIDSVDG) are disordered.

The protein belongs to the PEX28-32 family. PEX29 subfamily.

Its subcellular location is the endoplasmic reticulum membrane. With PEX23, contributes to the formation of endoplasmic reticulum-mitochondria junctions which are important for mitochondrial function. Involved in lipid dropplets formation. The sequence is that of Peroxisomal membrane protein PEX29 from Ogataea parapolymorpha (strain ATCC 26012 / BCRC 20466 / JCM 22074 / NRRL Y-7560 / DL-1) (Yeast).